A 704-amino-acid chain; its full sequence is Urea-proton symporter DUR3 (704 aa).

Helical transmembrane passes span 39–59 (YAVILGFGAFFAVFTSFLVWL), 80–100 (VKTGLIASVIVSQWTWAATIL), 115–135 (FWYASGATIQVLLFGVMAIEI), 159–179 (IVFLVFCLATNVVVTAMLLLG), 192–212 (LYAASFLIPLGVVVYTLAGGL), 216–236 (FLASYVHSVIVHVALVVFVFL), 291–311 (SSGGAVFGLINIVGNFGTVFV), 336–356 (LVWFAVPFSLATSLGLGALAL), 388–408 (LTMLFMAVTSAGSSELIAVSS), 435–455 (AVLGFGCFMGILAVVLNKAGV), 461–481 (YLAMGVLIGSAVIPIAFMLLW), 486–506 (AFGAILGATSGCVFGIITWLT), 527–547 (LAGNLVAILTGGLIHAVCSLV), 590–610 (AWIVKWGLVFTILIVVIWPVL), and 622–642 (FWFWAIVAIAWGTIGSIVIIG).

Belongs to the sodium:solute symporter (SSF) (TC 2.A.21) family. Expressed in root rhizodermis, including root hairs and cortex in more basal root zones. Expressed in shoots.

The protein localises to the cell membrane. Functionally, high-affinity urea-proton symporter involved in the active transport of urea across the plasma membrane into root cells. May play an important role in urea uptake by plant cells at low external urea concentrations. In Arabidopsis thaliana (Mouse-ear cress), this protein is Urea-proton symporter DUR3 (DUR3).